Here is a 561-residue protein sequence, read N- to C-terminus: MLPTFRLMTCAIVFVLPGLGHASQCPDWPAAKARSEVTALQQQIAEWDDSYHRQGISQIADELYDQARQKLNLWRSCFAVSTPESDPLKTAVGPLPHPVPHTGVNKLADEGSVKGWLKGRNDLWIQPKVDGVAVTLVYEKGRLVQAISRGDGRKGQDWTSQARLIKAIAQQLPQAESTILQGELYWRLDDHIQAASGSVNARSKVAGLLARQTISPQQADAIGLFVWDWPNGPADMAQRLAGLQAMGFEDSAAYTHPLENYVQAARWREHWYRNPLPFATDGVILRQGQRPPAQRWQASAPYWIAAWKHPYAQALAEVRKVNFKIGRSGRITPVLELTPVRLDDRTVSRISTGSLQRWQTLDIRPGDQIAVSLAGLTIPRLDGVVSRAAERADMIIPRADDFHELSCWQATPGCESQFRARLAWLSGKKGLALPGVGPGTWNTLIDNGQIMGLLDWMTLNHAELVNIPGFAERSSAKLLDSLQTARERPFQTWLKAIGLPPTGGARLPDNWHELAGRSVEQWQAEPGIGPGRAARLRAFFQDPQVQALSQQLQAQSISGFK.

Lysine 128 functions as the N6-AMP-lysine intermediate in the catalytic mechanism.

Belongs to the NAD-dependent DNA ligase family. LigB subfamily.

The catalysed reaction is NAD(+) + (deoxyribonucleotide)n-3'-hydroxyl + 5'-phospho-(deoxyribonucleotide)m = (deoxyribonucleotide)n+m + AMP + beta-nicotinamide D-nucleotide.. In terms of biological role, catalyzes the formation of phosphodiester linkages between 5'-phosphoryl and 3'-hydroxyl groups in double-stranded DNA using NAD as a coenzyme and as the energy source for the reaction. This chain is DNA ligase B, found in Pseudomonas syringae pv. syringae (strain B728a).